Reading from the N-terminus, the 139-residue chain is MIIGIGSDLIDITRVGKVIERHGERFLDRIFTAAERAKAERRAKNEKMVVATYAKRFAAKEACSKALGTGIRRGVWWRDMGVVNLPGGRPTMQLTGGALARLQALTPDGFEARIDVSITDDWPLAQAFVIISAVPLAKS.

The Mg(2+) site is built by Asp8 and Glu61.

Belongs to the P-Pant transferase superfamily. AcpS family. The cofactor is Mg(2+).

It localises to the cytoplasm. It carries out the reaction apo-[ACP] + CoA = holo-[ACP] + adenosine 3',5'-bisphosphate + H(+). Functionally, transfers the 4'-phosphopantetheine moiety from coenzyme A to a Ser of acyl-carrier-protein. The chain is Holo-[acyl-carrier-protein] synthase from Bradyrhizobium diazoefficiens (strain JCM 10833 / BCRC 13528 / IAM 13628 / NBRC 14792 / USDA 110).